A 154-amino-acid polypeptide reads, in one-letter code: 6,7-dimethyl-8-ribityllumazine synthase (154 aa).

5-amino-6-(D-ribitylamino)uracil is bound by residues Phe22, 56–58 (AFE), and 80–82 (AVI). 85–86 (AT) provides a ligand contact to (2S)-2-hydroxy-3-oxobutyl phosphate. The active-site Proton donor is the His88. Phe113 is a binding site for 5-amino-6-(D-ribitylamino)uracil. Arg127 lines the (2S)-2-hydroxy-3-oxobutyl phosphate pocket.

Belongs to the DMRL synthase family. Forms an icosahedral capsid composed of 60 subunits, arranged as a dodecamer of pentamers.

It carries out the reaction (2S)-2-hydroxy-3-oxobutyl phosphate + 5-amino-6-(D-ribitylamino)uracil = 6,7-dimethyl-8-(1-D-ribityl)lumazine + phosphate + 2 H2O + H(+). It participates in cofactor biosynthesis; riboflavin biosynthesis; riboflavin from 2-hydroxy-3-oxobutyl phosphate and 5-amino-6-(D-ribitylamino)uracil: step 1/2. In terms of biological role, catalyzes the formation of 6,7-dimethyl-8-ribityllumazine by condensation of 5-amino-6-(D-ribitylamino)uracil with 3,4-dihydroxy-2-butanone 4-phosphate. This is the penultimate step in the biosynthesis of riboflavin. This chain is 6,7-dimethyl-8-ribityllumazine synthase, found in Geobacillus thermodenitrificans (strain NG80-2).